A 387-amino-acid chain; its full sequence is Cysteine desulfurase IscS (387 aa).

Pyridoxal 5'-phosphate is bound by residues 73 to 74 (AT), Asn-155, Gln-183, and 203 to 205 (SAH). Lys-206 carries the N6-(pyridoxal phosphate)lysine modification. Residue Thr-241 coordinates pyridoxal 5'-phosphate. Cys-328 serves as the catalytic Cysteine persulfide intermediate. Cys-328 provides a ligand contact to [2Fe-2S] cluster.

Belongs to the class-V pyridoxal-phosphate-dependent aminotransferase family. NifS/IscS subfamily. As to quaternary structure, homodimer. Forms a heterotetramer with IscU, interacts with other sulfur acceptors. The cofactor is pyridoxal 5'-phosphate.

The protein localises to the cytoplasm. The enzyme catalyses (sulfur carrier)-H + L-cysteine = (sulfur carrier)-SH + L-alanine. Its pathway is cofactor biosynthesis; iron-sulfur cluster biosynthesis. Its function is as follows. Master enzyme that delivers sulfur to a number of partners involved in Fe-S cluster assembly, tRNA modification or cofactor biosynthesis. Catalyzes the removal of elemental sulfur atoms from cysteine to produce alanine. Functions as a sulfur delivery protein for Fe-S cluster synthesis onto IscU, an Fe-S scaffold assembly protein, as well as other S acceptor proteins. In Helicobacter pylori (strain J99 / ATCC 700824) (Campylobacter pylori J99), this protein is Cysteine desulfurase IscS.